The sequence spans 63 residues: Large ribosomal subunit protein uL29 (63 aa).

It belongs to the universal ribosomal protein uL29 family.

The protein is Large ribosomal subunit protein uL29 of Shewanella loihica (strain ATCC BAA-1088 / PV-4).